Here is a 71-residue protein sequence, read N- to C-terminus: Large ribosomal subunit protein bL31 (71 aa).

Zn(2+)-binding residues include Cys16, Cys18, Cys36, and Cys39.

This sequence belongs to the bacterial ribosomal protein bL31 family. Type A subfamily. In terms of assembly, part of the 50S ribosomal subunit. Zn(2+) is required as a cofactor.

In terms of biological role, binds the 23S rRNA. This chain is Large ribosomal subunit protein bL31, found in Thermotoga sp. (strain RQ2).